A 176-amino-acid polypeptide reads, in one-letter code: ATP-dependent protease subunit HslV (176 aa).

Threonine 5 is an active-site residue. Positions 161, 164, and 167 each coordinate Na(+).

Belongs to the peptidase T1B family. HslV subfamily. A double ring-shaped homohexamer of HslV is capped on each side by a ring-shaped HslU homohexamer. The assembly of the HslU/HslV complex is dependent on binding of ATP.

The protein resides in the cytoplasm. The catalysed reaction is ATP-dependent cleavage of peptide bonds with broad specificity.. Allosterically activated by HslU binding. Protease subunit of a proteasome-like degradation complex believed to be a general protein degrading machinery. In Caldicellulosiruptor saccharolyticus (strain ATCC 43494 / DSM 8903 / Tp8T 6331), this protein is ATP-dependent protease subunit HslV.